A 384-amino-acid chain; its full sequence is Neuropeptide Y receptor type 1 (384 aa).

At 1 to 44 (MNSTLFSQVENHSVHSNFSEKNAQLLAFENDDCHLPLAMIFTLA) the chain is on the extracellular side. Asparagine 2, asparagine 11, and asparagine 17 each carry an N-linked (GlcNAc...) asparagine glycan. The chain crosses the membrane as a helical span at residues 45 to 65 (LAYGAVIILGVSGNLALIIII). At 66–76 (LKQKEMRNVTN) the chain is on the cytoplasmic side. The helical transmembrane segment at 77–97 (ILIVNLSFSDLLVAIMCLPFT) threads the bilayer. At 98-116 (FVYTLMDHWVFGEAMCKLN) the chain is on the extracellular side. Cysteines 113 and 198 form a disulfide. Residues 117–137 (PFVQCVSITVSIFSLVLIAVE) form a helical membrane-spanning segment. At 138–154 (RHQLIINPRGWRPNNRH) the chain is on the cytoplasmic side. Residues 155–175 (AYVGIAVIWVLAVASSLPFLI) traverse the membrane as a helical segment. Topologically, residues 176–211 (YQVMTDEPFQNVTLDAYKDKYVCFDQFPSDSHRLSY) are extracellular. A helical transmembrane segment spans residues 212-232 (TTLLLVLQYFGPLCFIFICYF). Over 233 to 260 (KIYIRLKRRNNMMDKMRDNKYRSSETKR) the chain is Cytoplasmic. The helical transmembrane segment at 261–281 (INIMLLSIVVAFAVCWLPLTI) threads the bilayer. The Extracellular portion of the chain corresponds to 282–299 (FNTVFDWNHQIIATCNHN). Residues 300-320 (LLFLLCHLTAMISTCVNPIFY) traverse the membrane as a helical segment. At 321-384 (GFLNKNFQRD…INNNDDNEKI (64 aa)) the chain is on the cytoplasmic side. A lipid anchor (S-palmitoyl cysteine) is attached at cysteine 338. At serine 368 the chain carries Phosphoserine.

It belongs to the G-protein coupled receptor 1 family.

It is found in the cell membrane. Receptor for neuropeptide Y and peptide YY. The rank order of affinity of this receptor for pancreatic polypeptides is NPY &gt; [Pro-34] PYY, PYY and [Leu-31, Pro-34] NPY &gt; NPY (2-36) &gt; [Ile-31, Gln-34] PP and PYY (3-36) &gt; PP &gt; NPY free acid. The polypeptide is Neuropeptide Y receptor type 1 (NPY1R) (Homo sapiens (Human)).